A 325-amino-acid chain; its full sequence is Glutarate 2-hydroxylase (325 aa).

Fe cation-binding residues include histidine 160, aspartate 162, and histidine 292.

This sequence belongs to the glutarate hydroxylase family. Homotetramer. Requires Fe(2+) as cofactor.

It carries out the reaction glutarate + 2-oxoglutarate + O2 = (S)-2-hydroxyglutarate + succinate + CO2. It participates in amino-acid degradation. Functionally, acts as an alpha-ketoglutarate-dependent dioxygenase catalyzing hydroxylation of glutarate (GA) to L-2-hydroxyglutarate (L2HG). Functions in a L-lysine degradation pathway that proceeds via cadaverine, glutarate and L-2-hydroxyglutarate. This chain is Glutarate 2-hydroxylase, found in Salmonella newport (strain SL254).